Consider the following 677-residue polypeptide: Methionine--tRNA ligase (677 aa).

Residues 15-25 carry the 'HIGH' region motif; that stretch reads PYANGSIHLGH. Positions 146, 149, 159, and 162 each coordinate Zn(2+). The short motif at 333–337 is the 'KMSKS' region element; it reads KMSKS. An ATP-binding site is contributed by Lys-336. Residues 575–677 enclose the tRNA-binding domain; it reads DFAKVDLRVA…EGAKPGQQVK (103 aa).

It belongs to the class-I aminoacyl-tRNA synthetase family. MetG type 1 subfamily. In terms of assembly, homodimer. Zn(2+) serves as cofactor.

The protein localises to the cytoplasm. It carries out the reaction tRNA(Met) + L-methionine + ATP = L-methionyl-tRNA(Met) + AMP + diphosphate. Is required not only for elongation of protein synthesis but also for the initiation of all mRNA translation through initiator tRNA(fMet) aminoacylation. The polypeptide is Methionine--tRNA ligase (Enterobacter sp. (strain 638)).